Reading from the N-terminus, the 318-residue chain is NADH-ubiquinone oxidoreductase chain 1 (318 aa).

The next 8 membrane-spanning stretches (helical) occupy residues 3–23 (LITL…LTLV), 70–90 (MFII…TPLP), 100–120 (LGIL…LWSG), 146–166 (LAII…TTLI), 171–191 (YIWL…STLA), 222–242 (LFFL…TILF), 254–273 (LYTT…FLWI), and 294–314 (LPLT…LASI).

This sequence belongs to the complex I subunit 1 family.

Its subcellular location is the mitochondrion inner membrane. It catalyses the reaction a ubiquinone + NADH + 5 H(+)(in) = a ubiquinol + NAD(+) + 4 H(+)(out). In terms of biological role, core subunit of the mitochondrial membrane respiratory chain NADH dehydrogenase (Complex I) that is believed to belong to the minimal assembly required for catalysis. Complex I functions in the transfer of electrons from NADH to the respiratory chain. The immediate electron acceptor for the enzyme is believed to be ubiquinone. The polypeptide is NADH-ubiquinone oxidoreductase chain 1 (MT-ND1) (Phyllostomus elongatus (Lesser spear-nosed bat)).